We begin with the raw amino-acid sequence, 57 residues long: Potassium channel toxin gamma-KTx 2.1 (57 aa).

An N-terminal signal peptide occupies residues 1-21 (MKISFVLLLTLFICSIGWSEA). 3 disulfides stabilise this stretch: cysteine 28-cysteine 49, cysteine 34-cysteine 54, and cysteine 38-cysteine 56.

It belongs to the short scorpion toxin superfamily. Potassium channel inhibitor family. Gamma-KTx 2 subfamily. Expressed by the venom gland.

Its subcellular location is the secreted. Its function is as follows. Blocks human and/or rat Kv11.1/KCNH2/ERG1, Kv11.2/KCNH6/ERG2 and Kv11.3/KCNH7/ERG3 by binding to channel outer vestibule (S5P domain) with a 1:1 stoichiometry. Inhibition data are the following: hERG1 (reversible, Kd=7.7 nM, IC(50)=3.3 nM, IC(50)=11.9 nM), rERG1 (reversible, Kd=19 nM), hERG2 (reversible, Kd=77 nM), rERG2 (irreversible, Kd=4.2 nM), hERG3 (reversible, Kd=11.5 nM) and rERG3 (reversible, Kd=747 nM) potassium channels. Also has a minimal effect on rat ELK1/KCNH4 potassium channels (9% inhibition at 100 nM). Both this toxin and CnErgTx1 (AC Q86QT3) share mechanism of action and have overlapping binding sites on ERG1. The potency of these two toxins is not affected by elevating potassium ion concentration from 2 to 98 mM. In addition, at high toxin concentrations, block of ERG1 macroscopic currents by these two toxins is incomplete (88%). The blockade by this toxin is preferentially closed channel state-dependent, with a component of open, but not inactive state-dependent blockade. This toxin produces a concentration-dependent prolongation of QTc in the isolated rabbit heart (16.3% at 100 nM). This chain is Potassium channel toxin gamma-KTx 2.1, found in Mesobuthus eupeus (Lesser Asian scorpion).